The primary structure comprises 215 residues: Histidine biosynthesis bifunctional protein HisIE (215 aa).

The tract at residues 1–114 is phosphoribosyl-AMP cyclohydrolase; the sequence is MLKKHDLLNL…FISNKYNINF (114 aa). Residues 115–215 are phosphoribosyl-ATP pyrophosphohydrolase; it reads LFKLEEIIEE…LNTNSEKLLK (101 aa).

This sequence in the N-terminal section; belongs to the PRA-CH family. The protein in the C-terminal section; belongs to the PRA-PH family.

It is found in the cytoplasm. The enzyme catalyses 1-(5-phospho-beta-D-ribosyl)-ATP + H2O = 1-(5-phospho-beta-D-ribosyl)-5'-AMP + diphosphate + H(+). It carries out the reaction 1-(5-phospho-beta-D-ribosyl)-5'-AMP + H2O = 1-(5-phospho-beta-D-ribosyl)-5-[(5-phospho-beta-D-ribosylamino)methylideneamino]imidazole-4-carboxamide. Its pathway is amino-acid biosynthesis; L-histidine biosynthesis; L-histidine from 5-phospho-alpha-D-ribose 1-diphosphate: step 2/9. The protein operates within amino-acid biosynthesis; L-histidine biosynthesis; L-histidine from 5-phospho-alpha-D-ribose 1-diphosphate: step 3/9. This is Histidine biosynthesis bifunctional protein HisIE (hisI) from Buchnera aphidicola subsp. Acyrthosiphon pisum (strain APS) (Acyrthosiphon pisum symbiotic bacterium).